We begin with the raw amino-acid sequence, 1054 residues long: Reverse gyrase (1054 aa).

An RG N-terminal-type zinc finger spans residues 1 to 43; that stretch reads MIPVVYSNLCPVCGGDLESKEIEKHVCFRKKRSLCLFPEDFLL. Residues cysteine 10, cysteine 13, cysteine 27, and cysteine 35 each contribute to the Zn(2+) site. A disulfide bridge links cysteine 35 with cysteine 650. 4 residues coordinate ATP: glutamine 61, lysine 84, threonine 85, and serine 86. One can recognise a Helicase ATP-binding domain in the interval 65-245; the sequence is AKRILRKESF…FRQLLNFDIG (181 aa). Positions 182–185 match the DEAD box motif; sequence DDVD. The interval 352–427 is latch region; sequence PSFRVTIEDI…EGEVIFPDLR (76 aa). Residues 502–1054 are topoisomerase I; it reads DLIKPALFIV…DLYAEIKSID (553 aa). Residues 506 to 662 form the Toprim domain; that stretch reads PALFIVESPT…VKRAEFHEVT (157 aa). Glutamate 512 contributes to the Mg(2+) binding site. The RG C-terminal-type zinc-finger motif lies at 581–609; sequence IKRCRDCGYQFTEDRESCPKCGSENVDNS. Positions 584, 587, 598, and 601 each coordinate Zn(2+). Aspartate 631 lines the Mg(2+) pocket. The 378-residue stretch at 677-1054 folds into the Topo IA-type catalytic domain; it reads DENLVKAQVV…DLYAEIKSID (378 aa). Tyrosine 809 functions as the O-(5'-phospho-DNA)-tyrosine intermediate in the catalytic mechanism.

This sequence in the N-terminal section; belongs to the DEAD box helicase family. DDVD subfamily. In the C-terminal section; belongs to the type IA topoisomerase family. In terms of assembly, monomer. Requires Zn(2+) as cofactor. The cofactor is Mg(2+).

The protein localises to the cytoplasm. It carries out the reaction ATP + H2O = ADP + phosphate + H(+). Modifies the topological state of DNA by introducing positive supercoils in an ATP-dependent process, increasing the linking number in steps of +1. Very efficient supercoiling occurs on relaxed DNA with a single-stranded bubble; the minimal bubble is 20 nucleotides (nt) and up to 10 positive supercoils can be introduced into a 3.1 kb plasmid with a 50 nt bubble. Positively supercoils DNA with all (d)NTPS, although it requires about 10-fold more of non-(d)ATP. In the absence of ATP (or at low levels of enzyme), or in the presence of ADP, relaxes negative supercoils. Only relaxes positive supercoils when the substrate contains a bubble. Also promotes strand annealing of complementary ssDNA circles. Binds to single-stranded DNA, transiently cleaves and then rejoins the ends, introducing a positive supercoil in the process. The scissile phosphodiester is attacked by the catalytic tyrosine of the enzyme, resulting in the formation of a DNA-(5'-phosphotyrosyl)-enzyme intermediate. Probably involved in rewinding DNA strands in regions of the chromosome that have opened up to allow replication, transcription, DNA repair and/or for DNA protection. Its function is as follows. In vitro protects DNA against degradation at 90 degrees Celsius, reducing dsDNA breakage about 8-fold; ATP hydrolysis is not necessary, while ADP decreases the protection somewhat. Coats all forms of dsDNA; the DNA is protected against cleavage and transcription. Recognizes nicked DNA and forms a coat at the nicking site, which may help hold DNA in a structure amenable to repair. The protein is Reverse gyrase of Archaeoglobus fulgidus (strain ATCC 49558 / DSM 4304 / JCM 9628 / NBRC 100126 / VC-16).